A 531-amino-acid chain; its full sequence is NAD(P)H-quinone oxidoreductase chain 4 (531 aa).

The next 14 helical transmembrane spans lie at 9–29 (FPWL…IPFF), 41–61 (FALS…INGF), 93–113 (MPLI…AWPV), 117–137 (PKLF…VFAV), 141–161 (LLFF…LAIW), 173–193 (FIIY…AMGF), 217–237 (IFCY…VPLH), 248–268 (TAPV…YALL), 282–302 (FAPL…LTSF), 311–331 (IAYS…SFSS), 337–357 (AMLQ…LVGA), 381–401 (FALW…SGFV), 422–442 (VVMA…LLSM), and 469–489 (VYII…PRLV).

This sequence belongs to the complex I subunit 4 family.

The protein resides in the cellular thylakoid membrane. It catalyses the reaction a plastoquinone + NADH + (n+1) H(+)(in) = a plastoquinol + NAD(+) + n H(+)(out). The catalysed reaction is a plastoquinone + NADPH + (n+1) H(+)(in) = a plastoquinol + NADP(+) + n H(+)(out). In terms of biological role, NDH-1 shuttles electrons from NAD(P)H, via FMN and iron-sulfur (Fe-S) centers, to quinones in the respiratory chain. The immediate electron acceptor for the enzyme in this species is believed to be plastoquinone. Couples the redox reaction to proton translocation (for every two electrons transferred, four hydrogen ions are translocated across the cytoplasmic membrane), and thus conserves the redox energy in a proton gradient. In Prochlorococcus marinus (strain MIT 9301), this protein is NAD(P)H-quinone oxidoreductase chain 4.